A 477-amino-acid polypeptide reads, in one-letter code: Bifunctional protein HldE (477 aa).

The tract at residues 1–318 (MKVTLPEFER…ENAVRGRADT (318 aa)) is ribokinase. At Lys-179 the chain carries N6-acetyllysine. 195–198 (NLSE) is an ATP binding site. Asp-264 is an active-site residue. Residues 344 to 477 (MTNGVFDILH…IKKIQLDKKG (134 aa)) are cytidylyltransferase.

This sequence in the N-terminal section; belongs to the carbohydrate kinase PfkB family. In the C-terminal section; belongs to the cytidylyltransferase family. As to quaternary structure, homodimer.

The enzyme catalyses D-glycero-beta-D-manno-heptose 7-phosphate + ATP = D-glycero-beta-D-manno-heptose 1,7-bisphosphate + ADP + H(+). The catalysed reaction is D-glycero-beta-D-manno-heptose 1-phosphate + ATP + H(+) = ADP-D-glycero-beta-D-manno-heptose + diphosphate. The protein operates within nucleotide-sugar biosynthesis; ADP-L-glycero-beta-D-manno-heptose biosynthesis; ADP-L-glycero-beta-D-manno-heptose from D-glycero-beta-D-manno-heptose 7-phosphate: step 1/4. Its pathway is nucleotide-sugar biosynthesis; ADP-L-glycero-beta-D-manno-heptose biosynthesis; ADP-L-glycero-beta-D-manno-heptose from D-glycero-beta-D-manno-heptose 7-phosphate: step 3/4. In terms of biological role, catalyzes the phosphorylation of D-glycero-D-manno-heptose 7-phosphate at the C-1 position to selectively form D-glycero-beta-D-manno-heptose-1,7-bisphosphate. Functionally, catalyzes the ADP transfer from ATP to D-glycero-beta-D-manno-heptose 1-phosphate, yielding ADP-D-glycero-beta-D-manno-heptose. This Escherichia coli O81 (strain ED1a) protein is Bifunctional protein HldE.